We begin with the raw amino-acid sequence, 4466 residues long: Dynein beta chain, ciliary (4466 aa).

The stem stretch occupies residues Met1–Lys1813. Ala154–Thr161 lines the ATP pocket. 4 coiled-coil regions span residues Thr733–Gln805, Thr1036–Glu1056, Trp1306–Ala1337, and Leu1443–Lys1468. AAA stretches follow at residues Tyr1814–Val2035, Lys2095–Lys2316, Glu2422–Gly2669, and Thr2767–Tyr3016. ATP-binding positions include Gly1852–Thr1859, Gly2133–Ser2140, Gly2460–Ser2467, and Gly2805–Gln2812. 3 coiled-coil regions span residues Ser3033–Gly3092, Glu3263–Ile3325, and Gln3573–Lys3642. The stalk stretch occupies residues Ser3033–Ile3325. AAA stretches follow at residues Leu3409–Val3636 and Val3846–Asn4072.

It belongs to the dynein heavy chain family. Consists of at least two heavy chains (alpha and beta), three intermediate chains and several light chains.

It localises to the cell projection. Its subcellular location is the cilium. It is found in the flagellum. The protein localises to the cytoplasm. The protein resides in the cytoskeleton. It localises to the flagellum axoneme. Force generating protein of eukaryotic cilia and flagella. Produces force towards the minus ends of microtubules. Dynein has ATPase activity; the force-producing power stroke is thought to occur on release of ADP. The polypeptide is Dynein beta chain, ciliary (Tripneustes gratilla (Hawaian sea urchin)).